Consider the following 329-residue polypeptide: 4-diphosphocytidyl-2-C-methyl-D-erythritol kinase (329 aa).

Residue K14 is part of the active site. 117–127 (PSGAGMGGASS) is an ATP binding site. D166 is an active-site residue.

This sequence belongs to the GHMP kinase family. IspE subfamily.

The catalysed reaction is 4-CDP-2-C-methyl-D-erythritol + ATP = 4-CDP-2-C-methyl-D-erythritol 2-phosphate + ADP + H(+). It participates in isoprenoid biosynthesis; isopentenyl diphosphate biosynthesis via DXP pathway; isopentenyl diphosphate from 1-deoxy-D-xylulose 5-phosphate: step 3/6. Its function is as follows. Catalyzes the phosphorylation of the position 2 hydroxy group of 4-diphosphocytidyl-2C-methyl-D-erythritol. This chain is 4-diphosphocytidyl-2-C-methyl-D-erythritol kinase, found in Rhodopirellula baltica (strain DSM 10527 / NCIMB 13988 / SH1).